A 300-amino-acid polypeptide reads, in one-letter code: Fructose-bisphosphate aldolase class 1 (300 aa).

The active-site Proton acceptor is glutamate 181. Lysine 218 acts as the Schiff-base intermediate with dihydroxyacetone-P in catalysis.

It belongs to the class I fructose-bisphosphate aldolase family.

It carries out the reaction beta-D-fructose 1,6-bisphosphate = D-glyceraldehyde 3-phosphate + dihydroxyacetone phosphate. The protein operates within carbohydrate degradation; glycolysis; D-glyceraldehyde 3-phosphate and glycerone phosphate from D-glucose: step 4/4. The chain is Fructose-bisphosphate aldolase class 1 (fda) from Synechocystis sp. (strain ATCC 27184 / PCC 6803 / Kazusa).